The chain runs to 452 residues: Probable glycine dehydrogenase (decarboxylating) subunit 1 (452 aa).

Belongs to the GcvP family. N-terminal subunit subfamily. In terms of assembly, the glycine cleavage system is composed of four proteins: P, T, L and H. In this organism, the P 'protein' is a heterodimer of two subunits.

It carries out the reaction N(6)-[(R)-lipoyl]-L-lysyl-[glycine-cleavage complex H protein] + glycine + H(+) = N(6)-[(R)-S(8)-aminomethyldihydrolipoyl]-L-lysyl-[glycine-cleavage complex H protein] + CO2. Its function is as follows. The glycine cleavage system catalyzes the degradation of glycine. The P protein binds the alpha-amino group of glycine through its pyridoxal phosphate cofactor; CO(2) is released and the remaining methylamine moiety is then transferred to the lipoamide cofactor of the H protein. This is Probable glycine dehydrogenase (decarboxylating) subunit 1 from Alcanivorax borkumensis (strain ATCC 700651 / DSM 11573 / NCIMB 13689 / SK2).